We begin with the raw amino-acid sequence, 381 residues long: Putrescine N-methyltransferase 3 (381 aa).

The segment at 21 to 81 (MNGYQNGTSK…TISHDNGNEL (61 aa)) is disordered. Polar residues-rich tracts occupy residues 23–39 (GYQNGTSKHQNGHQNGT) and 46–81 (HQNGISEHQNGHQNGTSEHQNGHQNGTISHDNGNEL). Residues 92–329 (PGWFSEFSAL…GVIGYMLCST (238 aa)) form the PABS domain. S-adenosyl-L-methionine is bound by residues Q123, E198, and 229 to 230 (DG). Residue D248 is the Proton acceptor of the active site. Y317 contributes to the S-adenosyl-L-methionine binding site.

Belongs to the class I-like SAM-binding methyltransferase superfamily. Putrescine methyltransferase family. In terms of tissue distribution, predominantly expressed in roots.

It catalyses the reaction putrescine + S-adenosyl-L-methionine = N-methylputrescine + S-adenosyl-L-homocysteine + H(+). The protein operates within alkaloid biosynthesis; nicotine biosynthesis. In terms of biological role, involved in the biosynthesis of pyridine alkaloid natural products, leading mainly to the production of anabasine, anatabine, nicotine and nornicotine, effective deterrents against herbivores with antiparasitic and pesticide properties (neurotoxins); nornicotine serves as the precursor in the synthesis of the carcinogen compound N'-nitrosonornicotine (NNN). Methyltransferase that mediates the conversion of putrescine to N-methylputrescine. Promotes leaves ripening. The chain is Putrescine N-methyltransferase 3 from Nicotiana tabacum (Common tobacco).